The primary structure comprises 122 residues: Large ribosomal subunit protein bL12 (122 aa).

It belongs to the bacterial ribosomal protein bL12 family. In terms of assembly, homodimer. Part of the ribosomal stalk of the 50S ribosomal subunit. Forms a multimeric L10(L12)X complex, where L10 forms an elongated spine to which 2 to 4 L12 dimers bind in a sequential fashion. Binds GTP-bound translation factors.

Forms part of the ribosomal stalk which helps the ribosome interact with GTP-bound translation factors. Is thus essential for accurate translation. In Staphylococcus epidermidis (strain ATCC 35984 / DSM 28319 / BCRC 17069 / CCUG 31568 / BM 3577 / RP62A), this protein is Large ribosomal subunit protein bL12.